The following is a 543-amino-acid chain: Sodium-dependent lysophosphatidylcholine symporter 1 (543 aa).

Over residues 1–14 the composition is skewed to low complexity; sequence MAKGEGAESGSAAG. Residues 1-34 are disordered; it reads MAKGEGAESGSAAGLLPTSILQSTERPAQVKKEP. The Cytoplasmic segment spans residues 1–40; that stretch reads MAKGEGAESGSAAGLLPTSILQSTERPAQVKKEPKKKKQQ. A helical membrane pass occupies residues 41–70; the sequence is LSVCNKLCYALGGAPYQVTGCALGFFLQIY. Residues 71–94 lie on the Extracellular side of the membrane; sequence LLDVAQKDEEVVFCFSSFQVGPFS. Residues 95 to 115 traverse the membrane as a helical segment; the sequence is ASIILFVGRAWDAITDPLVGL. Residues 116 to 127 lie on the Cytoplasmic side of the membrane; sequence CISKSPWTCLGR. A helical membrane pass occupies residues 128–147; it reads LMPWIIFSTPLAVIAYFLIW. Topologically, residues 148-157 are extracellular; the sequence is FVPDFPHGQT. Residues 158 to 182 form a helical membrane-spanning segment; the sequence is YWYLLFYCLFETMVTCFHVPYSALT. The Cytoplasmic segment spans residues 183-189; it reads MFISTEQ. The chain crosses the membrane as a helical span at residues 190 to 221; it reads TERDSATAYRMTVEVLGTVLGTAIQGQIVGQA. Over 222 to 241 the chain is Extracellular; sequence DTPCFQDLNSSTVASQSANH. Cys225 and Cys473 are joined by a disulfide. Residues Asn230 and Asn240 are each glycosylated (N-linked (GlcNAc...) asparagine). The helical transmembrane segment at 242–275 threads the bilayer; the sequence is THGTTSHRETQKAYLLAAGVIVCIYIICAVILIL. The Cytoplasmic segment spans residues 276 to 306; that stretch reads GVREQREPYEAQQSEPIAYFRGLRLVMSHGP. The helical transmembrane segment at 307–333 threads the bilayer; it reads YIKLITGFLFTSLAFMLVEGNFVLFCT. Residues 334-344 lie on the Extracellular side of the membrane; sequence YTLGFRNEFQN. Residues 345–363 traverse the membrane as a helical segment; the sequence is LLLAIMLSATLTIPIWQWF. The Cytoplasmic segment spans residues 364–367; it reads LTRF. The helical transmembrane segment at 368 to 389 threads the bilayer; sequence GKKTAVYVGISSAVPFLILVAL. Topologically, residues 390-392 are extracellular; it reads MES. The chain crosses the membrane as a helical span at residues 393 to 429; it reads NLIITYAVAVAAGISVAAAFLLPWSMLPDVIDDFHLK. Topologically, residues 430–439 are cytoplasmic; the sequence is QPHFHGTEPI. A helical transmembrane segment spans residues 440 to 466; the sequence is FFSFYVFFTKFASGVSLGISTLSLDFA. Residues 467–478 lie on the Extracellular side of the membrane; the sequence is GYQTRGCSQPER. Residues 479–502 traverse the membrane as a helical segment; that stretch reads VKFTLNMLVTMAPIVLILLGLLLF. Residues 503-543 lie on the Cytoplasmic side of the membrane; the sequence is KMYPIDEERRRQNKKALQALRDEASSSGCSETDSTELASIL.

This sequence belongs to the major facilitator superfamily. In terms of assembly, interacts with ERVFRD-1/syncytin-2. In placenta, associated with trophoblast cells.

The protein localises to the cell membrane. It is found in the endoplasmic reticulum membrane. The enzyme catalyses a 1-acyl-sn-glycero-3-phosphocholine(in) + Na(+)(in) = a 1-acyl-sn-glycero-3-phosphocholine(out) + Na(+)(out). The catalysed reaction is 1-(4Z,7Z,10Z,13Z,16Z,19Z-docosahexaenoyl)-sn-glycero-3-phosphocholine(in) + Na(+)(in) = 1-(4Z,7Z,10Z,13Z,16Z,19Z-docosahexaenoyl)-sn-glycero-3-phosphocholine(out) + Na(+)(out). It catalyses the reaction 1-(9Z-octadecenoyl)-sn-glycero-3-phosphocholine(in) + Na(+)(in) = 1-(9Z-octadecenoyl)-sn-glycero-3-phosphocholine(out) + Na(+)(out). It carries out the reaction 1-hexadecanoyl-sn-glycero-3-phosphocholine(in) + Na(+)(in) = 1-hexadecanoyl-sn-glycero-3-phosphocholine(out) + Na(+)(out). The enzyme catalyses a 1-acyl-sn-glycero-3-phosphoethanolamine(in) + Na(+)(in) = a 1-acyl-sn-glycero-3-phosphoethanolamine(out) + Na(+)(out). Sodium-dependent lysophosphatidylcholine (LPC) symporter, which plays an essential role for blood-brain barrier formation and function. Specifically expressed in endothelium of the blood-brain barrier of micro-vessels and transports LPC into the brain. Transport of LPC is essential because it constitutes the major mechanism by which docosahexaenoic acid (DHA), an omega-3 fatty acid that is essential for normal brain growth and cognitive function, enters the brain. Transports LPC carrying long-chain fatty acids such LPC oleate and LPC palmitate with a minimum acyl chain length of 14 carbons. Does not transport docosahexaenoic acid in unesterified fatty acid. Specifically required for blood-brain barrier formation and function, probably by mediating lipid transport. Not required for central nervous system vascular morphogenesis. Acts as a transporter for tunicamycin, an inhibitor of asparagine-linked glycosylation. In placenta, acts as a receptor for ERVFRD-1/syncytin-2 and is required for trophoblast fusion. The polypeptide is Sodium-dependent lysophosphatidylcholine symporter 1 (Homo sapiens (Human)).